The primary structure comprises 659 residues: Interferon-induced GTP-binding protein Mx1 (659 aa).

Methionine 1 bears the N-acetylmethionine mark. Residues 1–40 are disordered; it reads MVNSKGEITDSDPGSNHLLLNGLPDKAGKNQDTEPENSLC. Positions 65 to 338 constitute a Dynamin-type G domain; it reads DLALPAIAVI…LITHICKTLP (274 aa). The interval 75–82 is G1 motif; it reads GDQSSGKS. 75–82 lines the GTP pocket; it reads GDQSSGKS. The G2 motif stretch occupies residues 100–102; sequence VTR. The segment at 176–179 is G3 motif; the sequence is DLPG. Residues 176 to 180 and 245 to 248 contribute to the GTP site; these read DLPGI and TKPD. The G4 motif stretch occupies residues 245-248; that stretch reads TKPD. A G5 motif region spans residues 277 to 280; the sequence is KCRG. The interval 339 to 364 is bundle signaling element (BSE); sequence LLENQIKENHEKITEELKKYGSDVPE. Residues 364–531 are middle domain; the sequence is EEEHEKMFFL…HFQMEQIVYC (168 aa). The stalk stretch occupies residues 365–629; it reads EEHEKMFFLI…KDTYNWLLKE (265 aa). The segment at 552 to 555 is critical for lipid-binding; it reads KNKK. The 89-residue stretch at 571 to 659 folds into the GED domain; the sequence is LSEIFEHLLA…ARRRLAKFPG (89 aa).

The protein belongs to the TRAFAC class dynamin-like GTPase superfamily. Dynamin/Fzo/YdjA family. Homooligomer. Oligomerizes into multimeric filamentous or ring-like structures by virtue of its stalk domain. Oligomerization is critical for GTPase activity, protein stability, and recognition of viral target structures. Interacts with TRPC1, TRPC3, TRPC4, TRPC5, TRPC6 and TRPC7. Interacts with HSPA5. Interacts with TUBB/TUBB5. Interacts with DDX39A and DDX39B. In terms of processing, ISGylated.

It localises to the cytoplasm. The protein localises to the endoplasmic reticulum membrane. The protein resides in the perinuclear region. Interferon-induced dynamin-like GTPase with antiviral activity. The chain is Interferon-induced GTP-binding protein Mx1 (MX1) from Phoca vitulina (Harbor seal).